A 410-amino-acid polypeptide reads, in one-letter code: Cysteine desulfurase (410 aa).

Position 227 is an N6-(pyridoxal phosphate)lysine (Lys227). Cys365 serves as the catalytic Cysteine persulfide intermediate.

This sequence belongs to the class-V pyridoxal-phosphate-dependent aminotransferase family. Csd subfamily. As to quaternary structure, homodimer. Interacts with SufE and the SufBCD complex composed of SufB, SufC and SufD. The interaction with SufE is required to mediate the direct transfer of the sulfur atom from the S-sulfanylcysteine. Pyridoxal 5'-phosphate is required as a cofactor.

The protein localises to the cytoplasm. It catalyses the reaction (sulfur carrier)-H + L-cysteine = (sulfur carrier)-SH + L-alanine. The enzyme catalyses L-selenocysteine + AH2 = hydrogenselenide + L-alanine + A + H(+). The protein operates within cofactor biosynthesis; iron-sulfur cluster biosynthesis. Its function is as follows. Cysteine desulfurases mobilize the sulfur from L-cysteine to yield L-alanine, an essential step in sulfur metabolism for biosynthesis of a variety of sulfur-containing biomolecules. Component of the suf operon, which is activated and required under specific conditions such as oxidative stress and iron limitation. Acts as a potent selenocysteine lyase in vitro, that mobilizes selenium from L-selenocysteine. Selenocysteine lyase activity is however unsure in vivo. This chain is Cysteine desulfurase, found in Wigglesworthia glossinidia brevipalpis.